Consider the following 811-residue polypeptide: Transmembrane protease serine 6 (811 aa).

The tract at residues 1–48 is disordered; it reads MPRCFQLPCSTRMPTTEVPQAADGQGDAGDGEEAAEPEGKFKPPKNTK. Over 1-59 the chain is Cytoplasmic; it reads MPRCFQLPCSTRMPTTEVPQAADGQGDAGDGEEAAEPEGKFKPPKNTKRKNRDYVRFTP. The span at 8 to 18 shows a compositional bias: polar residues; that stretch reads PCSTRMPTTEV. Residues 60-80 form a helical; Signal-anchor for type II membrane protein membrane-spanning segment; sequence LLLVLAALVSAGVMLWYFLGY. Topologically, residues 81–811 are extracellular; the sequence is KAEVTVSQVY…VINWIQQVLT (731 aa). The SEA domain occupies 86–209; it reads VSQVYSGSLR…EGLVILEASV (124 aa). N-linked (GlcNAc...) asparagine glycosylation is found at asparagine 138, asparagine 184, asparagine 216, asparagine 338, asparagine 433, and asparagine 453. CUB domains are found at residues 213–336 and 323–440; these read VVLN…QDCQ and FLLS…QISL. Cysteine 335 and cysteine 366 are oxidised to a cystine. LDL-receptor class A domains are found at residues 445 to 477, 478 to 514, and 518 to 555; these read VQVYYSLYNQSDPCPGEFLCSVNGLCVPACDGI, KDCPNGLDERNCVCRAMFQCQEDSTCISLPRVCDRQP, and NGSDEEQCQEGVPCGTFTFQCEDRSCVKKPNPECDGQS. Disulfide bonds link cysteine 458-cysteine 470, cysteine 464-cysteine 480, cysteine 474-cysteine 489, cysteine 491-cysteine 503, cysteine 497-cysteine 516, cysteine 510-cysteine 525, cysteine 531-cysteine 543, cysteine 538-cysteine 557, cysteine 551-cysteine 566, and cysteine 602-cysteine 618. N-linked (GlcNAc...) asparagine glycosylation is present at asparagine 518. Residues 577–811 enclose the Peptidase S1 domain; sequence IVGGTVSSEG…VINWIQQVLT (235 aa). Catalysis depends on charge relay system residues histidine 617 and aspartate 668. 3 cysteine pairs are disulfide-bonded: cysteine 702–cysteine 768, cysteine 733–cysteine 747, and cysteine 758–cysteine 787. Serine 762 acts as the Charge relay system in catalysis.

This sequence belongs to the peptidase S1 family. As to quaternary structure, interacts with HJV. In terms of processing, the single-chain zymogen undergoes autoproteolytic processing. This results in TMPRSS6 shedding from the cell surface and conversion into an activated two-chains form which is released extracellularly. The process involves a trans-activation mechanism that requires TMPRSS6 oligomerization. In terms of tissue distribution, expressed at highest levels in adult mice liver, kidney and uterus. Also strongly expressed within the nasal cavity by olfactory epithelial cells. A weak, but detectable, signal in adult mice tissues analyzed including brain, lung, heart, kidney, spleen, muscle, intestine, thymus and pancreas. No signal in residual embryonic yolk sac, developing kidney tubules or in embryonic tissues analyzed including lung, heart, gastrointestinal tract and epithelium of the oral cavity.

It localises to the cell membrane. Membrane-bound serine protease. Through the cleavage of cell surface HJV, a regulator of the expression of the iron absorption-regulating hormone hepicidin/HAMP, plays a role in iron homeostasis. This is Transmembrane protease serine 6 (Tmprss6) from Mus musculus (Mouse).